Here is a 340-residue protein sequence, read N- to C-terminus: MTVTMQYEKDVTVAALDGKRIAVIGYGSQGHAHAQNLRDTGHDVIIGVRAGKSFDKAKEDGFETFEVAEAAKQADVIMILAPDEIQADLYNEEIAPNLEAGNALGFAHGFNVHFEFIKVPADVDVFMCAPKGPGHLVRRTFEEGFGVPALYAVYQDATGNAKHIAMDWAKGVGSARVGLLETTFKEETEEDLFGEQAVLCGGLTALMQAGFEVLTEAGYAPELAYFEVLHEMKLIVDLVYEGGFKKMRQSISNTAEFGDYVSGPRVITDQVKENMKAVLADIQSGKFANDFVNDYKAGRPRMEAYRKEAENLEIEKVGAELRKAMPFVGRNDDDAFKIYN.

The KARI N-terminal Rossmann domain maps to 1-182 (MTVTMQYEKD…GSARVGLLET (182 aa)). Residues 26–29 (YGSQ), Arg-49, Ser-53, and 83–86 (DEIQ) each bind NADP(+). Residue His-108 is part of the active site. Residue Gly-134 coordinates NADP(+). Residues 183-328 (TFKEETEEDL…AELRKAMPFV (146 aa)) enclose the KARI C-terminal knotted domain. Residues Asp-191, Glu-195, Glu-227, and Glu-231 each contribute to the Mg(2+) site. Ser-252 lines the substrate pocket.

Belongs to the ketol-acid reductoisomerase family. It depends on Mg(2+) as a cofactor.

It carries out the reaction (2R)-2,3-dihydroxy-3-methylbutanoate + NADP(+) = (2S)-2-acetolactate + NADPH + H(+). The catalysed reaction is (2R,3R)-2,3-dihydroxy-3-methylpentanoate + NADP(+) = (S)-2-ethyl-2-hydroxy-3-oxobutanoate + NADPH + H(+). Its pathway is amino-acid biosynthesis; L-isoleucine biosynthesis; L-isoleucine from 2-oxobutanoate: step 2/4. It participates in amino-acid biosynthesis; L-valine biosynthesis; L-valine from pyruvate: step 2/4. Its function is as follows. Involved in the biosynthesis of branched-chain amino acids (BCAA). Catalyzes an alkyl-migration followed by a ketol-acid reduction of (S)-2-acetolactate (S2AL) to yield (R)-2,3-dihydroxy-isovalerate. In the isomerase reaction, S2AL is rearranged via a Mg-dependent methyl migration to produce 3-hydroxy-3-methyl-2-ketobutyrate (HMKB). In the reductase reaction, this 2-ketoacid undergoes a metal-dependent reduction by NADPH to yield (R)-2,3-dihydroxy-isovalerate. This chain is Ketol-acid reductoisomerase (NADP(+)), found in Streptococcus suis (strain 98HAH33).